Here is a 7311-residue protein sequence, read N- to C-terminus: MAM and LDL-receptor class A domain-containing protein 2 (7311 aa).

16 consecutive MAM domains span residues 4 to 171 (AYCD…SCVT), 199 to 361 (LDCD…FCSP), 363 to 530 (KQCT…VCPP), 532 to 695 (GDCN…NCPV), 727 to 887 (YDCT…QCPV), 889 to 1050 (MQCS…ACPL), 1052 to 1220 (GDCT…RCRL), 1228 to 1392 (FDCN…SCPS), 1394 to 1557 (GMCS…SCPA), 1559 to 1722 (GDCS…NCIQ), 1755 to 1918 (NDCN…KCPS), 1920 to 2087 (TDCT…PCPL), 2089 to 2254 (GDCD…RCSV), 2274 to 2437 (NNCT…PCPP), 2439 to 2601 (TVCD…PCPP), and 2603 to 2771 (GSCD…YCVG). The tract at residues 2461-2481 (WKRDSGGTPSAGTGPSRDHTT) is disordered. Residues 2466–2475 (GGTPSAGTGP) show a composition bias toward low complexity. P-type domains lie at 2771–2817 (GLCS…FYHP) and 2818–2862 (SACA…FHGP). 6 disulfide bridges follow: cysteine 2773–cysteine 2802, cysteine 2784–cysteine 2801, cysteine 2795–cysteine 2813, cysteine 2820–cysteine 2847, cysteine 2831–cysteine 2846, and cysteine 2841–cysteine 2858. 4 MAM domains span residues 2883 to 3048 (WDCT…TCPP), 3050 to 3214 (RECD…PCPP), 3216 to 3384 (GSCD…FCPS), and 3429 to 3587 (GACT…NCTL). The LDL-receptor class A 1 domain occupies 3593-3628 (SCGQQHRCIRGSCIDRGRVCDYTDDCGDNSDEQNCY). 3 cysteine pairs are disulfide-bonded: cysteine 3594–cysteine 3605, cysteine 3600–cysteine 3618, and cysteine 3612–cysteine 3627. An MAM 21 domain is found at 3632–3794 (YRCSFEKSLC…DLSMTSSCQS (163 aa)). LDL-receptor class A domains lie at 3814-3850 (PCPR…VNCG) and 4016-4054 (SCIS…STCA). Cystine bridges form between cysteine 3815–cysteine 3827, cysteine 3822–cysteine 3840, and cysteine 3834–cysteine 3849. The MAM 22 domain occupies 3850 to 4011 (GSCSFEPGLC…DDVTFQGCAL (162 aa)). 3 cysteine pairs are disulfide-bonded: cysteine 4017-cysteine 4029, cysteine 4024-cysteine 4042, and cysteine 4036-cysteine 4053. Residues 4058-4221 (ERCNFEQDLC…DVSFTPNCRP (164 aa)) enclose the MAM 23 domain. One can recognise an LDL-receptor class A 4 domain in the interval 4239–4276 (GCQPGKFKCANGGNCISVSKVCNFYSDCSGGSDEMNCP). 3 cysteine pairs are disulfide-bonded: cysteine 4240–cysteine 4253, cysteine 4247–cysteine 4266, and cysteine 4260–cysteine 4275. Residues 4277–4438 (ATCNFQNSFC…DDVSFEHCAE (162 aa)) enclose the MAM 24 domain. In terms of domain architecture, LDL-receptor class A 5 spans 4444–4483 (TCSGLSVFRCQSGHCIAMSGKCDFEPDCCDGSEETNIVCA). Intrachain disulfides connect cysteine 4445–cysteine 4458, cysteine 4453–cysteine 4471, and cysteine 4465–cysteine 4482. An MAM 25 domain is found at 4486 to 4646 (NRCNFEAGLC…DISFTPDCVV (161 aa)). LDL-receptor class A domains lie at 4660-4699 (PTQP…DLCG) and 4859-4899 (YCSG…QSCS). Cystine bridges form between cysteine 4668–cysteine 4687, cysteine 4681–cysteine 4698, cysteine 4860–cysteine 4876, cysteine 4871–cysteine 4889, and cysteine 4883–cysteine 4898. The region spanning 4700–4862 (WPCDFQRGTC…NNYTLTYCSG (163 aa)) is the MAM 26 domain. Residues 4903–5063 (SRCTFENGLC…SIAMKPSCQQ (161 aa)) form the MAM 27 domain. The region spanning 5085–5122 (NCVLPQVPCVSDGKCVSPSQVCDFNLDCADASDERSCP) is the LDL-receptor class A 8 domain. 3 disulfides stabilise this stretch: cysteine 5086–cysteine 5099, cysteine 5093–cysteine 5112, and cysteine 5106–cysteine 5121. Residues 5123–5281 (HMCTFESDQC…DDIKFVDCAL (159 aa)) enclose the MAM 28 domain. Residues 5287-5322 (SCPSQFTCARNSCVSNDYVCDFNDDCGDGSDETLCG) form the LDL-receptor class A 9 domain. 3 cysteine pairs are disulfide-bonded: cysteine 5288/cysteine 5299, cysteine 5294/cysteine 5312, and cysteine 5306/cysteine 5321. Residues 5326 to 5489 (TRCDFSRGSC…DVSFTTGCKQ (164 aa)) form the MAM 29 domain. The region spanning 5513–5552 (QCTTAEFNCFNQGSGACIPSTQVCNFQPNCNDGVDEQNCA) is the LDL-receptor class A 10 domain. 3 disulfide bridges follow: cysteine 5514/cysteine 5529, cysteine 5521/cysteine 5542, and cysteine 5536/cysteine 5551. The MAM 30 domain occupies 5554–5719 (TKCSFDGGDF…DDIEFLNCVP (166 aa)). Positions 5725–5763 (KCTADEFQCARGGCIPKTSVCDFKADCMVGDVSDESSCS) constitute an LDL-receptor class A 11 domain. Disulfide bonds link cysteine 5726-cysteine 5738, cysteine 5733-cysteine 5751, and cysteine 5745-cysteine 5762. The region spanning 5768–5935 (GQCDFEHGLC…LTPGCQICTD (168 aa)) is the MAM 31 domain. The region spanning 5957-5993 (PCSLQQYVCKNLRCVDKAQICNFKDDCGDNSDELPCG) is the LDL-receptor class A 12 domain. Intrachain disulfides connect cysteine 5958–cysteine 5970, cysteine 5965–cysteine 5983, and cysteine 5977–cysteine 5992. Positions 5994-6156 (SNCTFEGDCY…DISFTDNCFV (163 aa)) constitute an MAM 32 domain. A disordered region spans residues 6014–6034 (NFHWRRRNGKTPSVGTGPTND). A compositionally biased stretch (polar residues) spans 6023-6034 (KTPSVGTGPTND). The LDL-receptor class A 13 domain occupies 6161 to 6200 (TCTPNEVKCRTSGHCVAEQRVCDHVKDCNDGTDEDALICS). Disulfide bonds link cysteine 6162-cysteine 6175, cysteine 6169-cysteine 6188, and cysteine 6182-cysteine 6199. The region spanning 6204-6365 (ASCDFDVNWC…DISFSAGCYK (162 aa)) is the MAM 33 domain. Positions 6377–6414 (RCSKVQFYCKADDLCINIHWKCDGEKDCTDGADEMLCP) constitute an LDL-receptor class A 14 domain. Disulfide bonds link cysteine 6378-cysteine 6391, cysteine 6385-cysteine 6404, and cysteine 6398-cysteine 6413. MAM domains follow at residues 6430 to 6590 (ANCN…NCAK), 6606 to 6779 (LDED…NCDF), 6808 to 6965 (GDCT…QCQF), and 7173 to 7311 (GSCN…YNNL).

Component of the acid-insoluble and acid-soluble organic matrix of the aragonitic skeleton (at protein level).

It localises to the secreted. The sequence is that of MAM and LDL-receptor class A domain-containing protein 2 from Acropora millepora (Staghorn coral).